Reading from the N-terminus, the 715-residue chain is Phosphoribosylformylglycinamidine synthase subunit PurL (715 aa).

His-33 is a catalytic residue. An ATP-binding site is contributed by Tyr-36. A Mg(2+)-binding site is contributed by Glu-77. Residues 78-81 (SHNH) and Arg-100 each bind substrate. Catalysis depends on His-79, which acts as the Proton acceptor. Asp-101 contributes to the Mg(2+) binding site. Gln-225 is a binding site for substrate. A Mg(2+)-binding site is contributed by Asp-253. 297-299 (ESQ) contacts substrate. The ATP site is built by Asn-475 and Gly-512. Asn-513 is a binding site for Mg(2+). A substrate-binding site is contributed by Ser-515.

It belongs to the FGAMS family. As to quaternary structure, monomer. Part of the FGAM synthase complex composed of 1 PurL, 1 PurQ and 2 PurS subunits.

The protein localises to the cytoplasm. It catalyses the reaction N(2)-formyl-N(1)-(5-phospho-beta-D-ribosyl)glycinamide + L-glutamine + ATP + H2O = 2-formamido-N(1)-(5-O-phospho-beta-D-ribosyl)acetamidine + L-glutamate + ADP + phosphate + H(+). The protein operates within purine metabolism; IMP biosynthesis via de novo pathway; 5-amino-1-(5-phospho-D-ribosyl)imidazole from N(2)-formyl-N(1)-(5-phospho-D-ribosyl)glycinamide: step 1/2. Part of the phosphoribosylformylglycinamidine synthase complex involved in the purines biosynthetic pathway. Catalyzes the ATP-dependent conversion of formylglycinamide ribonucleotide (FGAR) and glutamine to yield formylglycinamidine ribonucleotide (FGAM) and glutamate. The FGAM synthase complex is composed of three subunits. PurQ produces an ammonia molecule by converting glutamine to glutamate. PurL transfers the ammonia molecule to FGAR to form FGAM in an ATP-dependent manner. PurS interacts with PurQ and PurL and is thought to assist in the transfer of the ammonia molecule from PurQ to PurL. The chain is Phosphoribosylformylglycinamidine synthase subunit PurL from Methanosarcina acetivorans (strain ATCC 35395 / DSM 2834 / JCM 12185 / C2A).